Here is a 538-residue protein sequence, read N- to C-terminus: uncharacterized protein (538 aa).

Residues 1 to 13 are compositionally biased toward low complexity; it reads MYNNNSSTSSDSS. Residues 1–43 form a disordered region; that stretch reads MYNNNSSTSSDSSNSEEKANAQHASSTDSTSEHTDPAVADEGF. The next 12 membrane-spanning stretches (helical) occupy residues 97-117, 134-154, 163-183, 194-214, 226-246, 254-274, 328-348, 367-387, 408-428, 434-454, 458-478, and 504-524; these read ILHVALLAFTTLTASWGSSVF, VALLGMSLYVCGFASGPILWA, KIPLIVGMFMFSIFSIAVAVA, FFSGFCASSPLSVVAAAFADM, IFACITFAGPLIGPIAGGFLA, WTEYITSFMGFFSTLCLLFMK, PIVFLLTLYMSFVYGILYLLL, ALPYIGLLVGVILGAALIAYF, LPPMMIGSVLFPAGIFWLAWS, VHWIVPTLSGLLTGCGILTIF, LIYLIDAYLFRAASVIAANTI, and GSLLGFIATALIPIPTLFFIF.

It belongs to the major facilitator superfamily. CAR1 family.

Its subcellular location is the endoplasmic reticulum. It localises to the membrane. This is an uncharacterized protein from Schizosaccharomyces pombe (strain 972 / ATCC 24843) (Fission yeast).